A 98-amino-acid polypeptide reads, in one-letter code: MKIIKEAVAGTLESSDLLVKVAPGLPDRLDIHIRSEVMRQFGAHIRAVIDDTLGKLGVTEGDVTVEDKGALDCAIRARLQTAVLRSVGDVKIEWEKLQ.

S14 bears the O-(phosphoribosyl dephospho-coenzyme A)serine mark.

It belongs to the CitD family. As to quaternary structure, oligomer with a subunit composition of (alpha,beta,gamma)6.

Its subcellular location is the cytoplasm. Its function is as follows. Covalent carrier of the coenzyme of citrate lyase. In Albidiferax ferrireducens (strain ATCC BAA-621 / DSM 15236 / T118) (Rhodoferax ferrireducens), this protein is Citrate lyase acyl carrier protein.